The sequence spans 298 residues: Tyrosine recombinase XerD (298 aa).

In terms of domain architecture, Core-binding (CB) spans 2–87 (KQELARIEQF…AVRRLFQYLY (86 aa)). One can recognise a Tyr recombinase domain in the interval 108 to 292 (RLPKDLSEAQ…ATERLRQLHQ (185 aa)). Residues Arg148, Lys172, His244, Arg247, and His270 contribute to the active site. The active-site O-(3'-phospho-DNA)-tyrosine intermediate is the Tyr279.

It belongs to the 'phage' integrase family. XerD subfamily. As to quaternary structure, forms a cyclic heterotetrameric complex composed of two molecules of XerC and two molecules of XerD, in which XerC interacts with XerD via its C-terminal region, XerD interacts with XerC via its C-terminal region and so on.

The protein resides in the cytoplasm. With respect to regulation, ftsK may regulate the catalytic switch between XerC and XerD in the heterotetrameric complex during the two steps of the recombination process. Functionally, site-specific tyrosine recombinase, which acts by catalyzing the cutting and rejoining of the recombining DNA molecules. Binds cooperatively to specific DNA consensus sequences that are separated from XerC binding sites by a short central region, forming the heterotetrameric XerC-XerD complex that recombines DNA substrates. The complex is essential to convert dimers of the bacterial chromosome into monomers to permit their segregation at cell division. It also contributes to the segregational stability of plasmids. In the complex XerD specifically exchanges the bottom DNA strands. The chain is Tyrosine recombinase XerD from Shigella flexneri.